Reading from the N-terminus, the 484-residue chain is Putative amidase AmiA2 (484 aa).

Residues Lys93 and Ser167 each act as charge relay system in the active site. The Acyl-ester intermediate role is filled by Ser191.

This sequence belongs to the amidase family.

It carries out the reaction a monocarboxylic acid amide + H2O = a monocarboxylate + NH4(+). The sequence is that of Putative amidase AmiA2 (amiA2) from Mycobacterium bovis (strain ATCC BAA-935 / AF2122/97).